Reading from the N-terminus, the 376-residue chain is Queuine tRNA-ribosyltransferase (376 aa).

Catalysis depends on D89, which acts as the Proton acceptor. Substrate contacts are provided by residues 89-93 (DSGGF), D143, Q187, and G214. Positions 245–251 (GVGKPQD) are RNA binding. D264 serves as the catalytic Nucleophile. Residues 269–273 (TRNAR) form an RNA binding; important for wobble base 34 recognition region. The Zn(2+) site is built by C302, C304, C307, and H333.

This sequence belongs to the queuine tRNA-ribosyltransferase family. Homodimer. Within each dimer, one monomer is responsible for RNA recognition and catalysis, while the other monomer binds to the replacement base PreQ1. It depends on Zn(2+) as a cofactor.

It carries out the reaction 7-aminomethyl-7-carbaguanine + guanosine(34) in tRNA = 7-aminomethyl-7-carbaguanosine(34) in tRNA + guanine. It functions in the pathway tRNA modification; tRNA-queuosine biosynthesis. Functionally, catalyzes the base-exchange of a guanine (G) residue with the queuine precursor 7-aminomethyl-7-deazaguanine (PreQ1) at position 34 (anticodon wobble position) in tRNAs with GU(N) anticodons (tRNA-Asp, -Asn, -His and -Tyr). Catalysis occurs through a double-displacement mechanism. The nucleophile active site attacks the C1' of nucleotide 34 to detach the guanine base from the RNA, forming a covalent enzyme-RNA intermediate. The proton acceptor active site deprotonates the incoming PreQ1, allowing a nucleophilic attack on the C1' of the ribose to form the product. After dissociation, two additional enzymatic reactions on the tRNA convert PreQ1 to queuine (Q), resulting in the hypermodified nucleoside queuosine (7-(((4,5-cis-dihydroxy-2-cyclopenten-1-yl)amino)methyl)-7-deazaguanosine). This Erwinia tasmaniensis (strain DSM 17950 / CFBP 7177 / CIP 109463 / NCPPB 4357 / Et1/99) protein is Queuine tRNA-ribosyltransferase.